A 422-amino-acid chain; its full sequence is F-box/WD repeat-containing protein 2 (422 aa).

In terms of domain architecture, F-box spans 54–101 (RDFLKLLPLELSFYLLKWLDPQTLLTCCLVSKQWNKVISACTEVWQTA). 4 WD repeats span residues 146-183 (GHSA…CVYG), 185-221 (QTHT…RTQH), 224-265 (GHTG…NTLT), and 276-314 (LQKC…NCKC). Lysine 298 carries the N6-acetyllysine modification.

Directly interacts with SKP1 and CUL1. Widely expressed during embryogenesis and in adult tissues.

Substrate-recognition component of the SCF (SKP1-CUL1-F-box protein)-type E3 ubiquitin ligase complex. In Mus musculus (Mouse), this protein is F-box/WD repeat-containing protein 2 (Fbxw2).